A 257-amino-acid polypeptide reads, in one-letter code: V-type proton ATPase subunit D (257 aa).

Positions 215-257 are disordered; sequence KEQEAAQKALEGPGPGEDAAHSENNPPRNLLASEEDNLPVLFN.

It belongs to the V-ATPase D subunit family. V-ATPase is a heteromultimeric enzyme made up of two complexes: the ATP-hydrolytic V1 complex and the proton translocation V0 complex. The V1 complex consists of three catalytic AB heterodimers that form a heterohexamer, three peripheral stalks each consisting of EG heterodimers, one central rotor including subunits D and F, and the regulatory subunits C and H. The proton translocation complex V0 consists of the proton transport subunit a, a ring of proteolipid subunits c9c'', rotary subunit d, subunits e and f, and the accessory subunits vah-19/Ac45 and vah-20/PRR.

Subunit of the V1 complex of vacuolar(H+)-ATPase (V-ATPase), a multisubunit enzyme composed of a peripheral complex (V1) that hydrolyzes ATP and a membrane integral complex (V0) that translocates protons. V-ATPase is responsible for acidifying and maintaining the pH of intracellular compartments and in some cell types, is targeted to the plasma membrane, where it is responsible for acidifying the extracellular environment. The polypeptide is V-type proton ATPase subunit D (Caenorhabditis elegans).